The following is a 762-amino-acid chain: Homeobox-leucine zipper protein MERISTEM L1 (762 aa).

A disordered region spans residues 13 to 72 (MFDMTPKNSENDLGITGSHEEDFETKSGAEVTMENPLEEELQDPNQRPNKKKRYHRHTQR). Basic and acidic residues predominate over residues 30 to 39 (SHEEDFETKS). Residues 60–71 (PNKKKRYHRHTQ) show a composition bias toward basic residues. Residues 62 to 121 (KKKRYHRHTQRQIQELESFFKECPHPDDKQRKELSRELSLEPLQVKFWFQNKRTQMKAQH) constitute a DNA-binding region (homeobox). Residues 110-192 (FQNKRTQMKA…DRISAIAAKY (83 aa)) are a coiled coil. Residues 253 to 484 (SEADKPMIVE…LDRQCERLAS (232 aa)) form the START domain.

This sequence belongs to the HD-ZIP homeobox family. Class IV subfamily. Interacts with GAI/RGA2, RGA/RGA1/GRS, RGL2/SCL19 and PDF2. Interacts with AIL7/PLT7, ANT, BBM and AIL1.

It is found in the nucleus. Probable transcription factor involved in cell specification and pattern formation during embryogenesis. Binds to the L1 box DNA sequence 5'-TAAATG[CT]A-3'. Plays a role in maintaining the identity of L1 cells, possibly by interacting with their L1 box or other target-gene promoters; binds to the LIP1 gene promoter and stimulates its expression upon imbibition. Acts as a positive regulator of gibberellins (GAs)-regulated epidermal gene expression (e.g. LIP1, LIP2, LTP1, FDH and PDF1). Functionally redundant to PDF2. Seems to promote cell differentiation. This is Homeobox-leucine zipper protein MERISTEM L1 from Arabidopsis thaliana (Mouse-ear cress).